The following is a 180-amino-acid chain: UPF0227 protein YcfP (180 aa).

This sequence belongs to the UPF0227 family.

In Escherichia coli O139:H28 (strain E24377A / ETEC), this protein is UPF0227 protein YcfP.